The primary structure comprises 89 residues: Small ribosomal subunit protein uS14A (89 aa).

The tract at residues 34–54 (ESLRKLPRDSNPNRLKNRDKI) is disordered.

The protein belongs to the universal ribosomal protein uS14 family. In terms of assembly, part of the 30S ribosomal subunit. Contacts proteins S3 and S10.

Its function is as follows. Binds 16S rRNA, required for the assembly of 30S particles and may also be responsible for determining the conformation of the 16S rRNA at the A site. The chain is Small ribosomal subunit protein uS14A from Streptococcus pyogenes serotype M1.